A 259-amino-acid chain; its full sequence is Thiazole synthase (259 aa).

Residue K99 is the Schiff-base intermediate with DXP of the active site. 1-deoxy-D-xylulose 5-phosphate is bound by residues G161, A187–G188, and N209–I219.

The protein belongs to the ThiG family. As to quaternary structure, homotetramer. Forms heterodimers with either ThiH or ThiS.

It localises to the cytoplasm. The catalysed reaction is [ThiS sulfur-carrier protein]-C-terminal-Gly-aminoethanethioate + 2-iminoacetate + 1-deoxy-D-xylulose 5-phosphate = [ThiS sulfur-carrier protein]-C-terminal Gly-Gly + 2-[(2R,5Z)-2-carboxy-4-methylthiazol-5(2H)-ylidene]ethyl phosphate + 2 H2O + H(+). The protein operates within cofactor biosynthesis; thiamine diphosphate biosynthesis. Catalyzes the rearrangement of 1-deoxy-D-xylulose 5-phosphate (DXP) to produce the thiazole phosphate moiety of thiamine. Sulfur is provided by the thiocarboxylate moiety of the carrier protein ThiS. In vitro, sulfur can be provided by H(2)S. This Aliarcobacter butzleri (strain RM4018) (Arcobacter butzleri) protein is Thiazole synthase.